Here is a 283-residue protein sequence, read N- to C-terminus: MSIDAKLSRQASGSKAGVACVPDAYSFSEARSPGTRFALMLSAVAAGLAGGAMLHSAMSATSALTGLFIVLALAGGFLSTWSPCGYSSLSLLRPAGRYSFASVLRWSPTFFTHALGYAIGAVVLGGALGMAGWLLFSSLPFSYMVAGMAVLALGYGAHQFGFMKMPYPQRRAQVPHDARFRFRSSVIGLLYGYALGMNYLTYVQTPILYIVTGVALFCGDVKTAIVIIGIFNIGRCLPVAVNFLPVKNVTVQVWLARWQERAVEVDGFLLLSVGSAALMLLVL.

7 helical membrane passes run 37-57 (FALM…LHSA), 58-78 (MSAT…GGFL), 116-136 (GYAI…WLLF), 143-163 (YMVA…FGFM), 187-207 (IGLL…QTPI), 210-230 (IVTG…IIGI), and 263-283 (VEVD…LLVL).

It is found in the cell membrane. The protein operates within one-carbon metabolism; methylamine degradation. This Methylobacillus flagellatus (strain ATCC 51484 / DSM 6875 / VKM B-1610 / KT) protein is Methylamine utilization protein MauF (mauF).